The sequence spans 424 residues: Enolase (424 aa).

Gln-162 is a (2R)-2-phosphoglycerate binding site. Glu-204 functions as the Proton donor in the catalytic mechanism. Mg(2+) contacts are provided by Asp-241, Glu-284, and Asp-311. Lys-336, Arg-365, Ser-366, and Lys-387 together coordinate (2R)-2-phosphoglycerate. The active-site Proton acceptor is Lys-336.

Belongs to the enolase family. The cofactor is Mg(2+).

Its subcellular location is the cytoplasm. It is found in the secreted. The protein localises to the cell surface. The catalysed reaction is (2R)-2-phosphoglycerate = phosphoenolpyruvate + H2O. The protein operates within carbohydrate degradation; glycolysis; pyruvate from D-glyceraldehyde 3-phosphate: step 4/5. Catalyzes the reversible conversion of 2-phosphoglycerate (2-PG) into phosphoenolpyruvate (PEP). It is essential for the degradation of carbohydrates via glycolysis. This Rhizobium leguminosarum bv. trifolii (strain WSM2304) protein is Enolase.